Here is a 405-residue protein sequence, read N- to C-terminus: S-adenosylmethionine sensor upstream of mTORC1 (405 aa).

The tract at residues 1-34 is disordered; the sequence is MEPGAGGRNTARAQRAGSPNTPPPREQERKLEQE. Basic and acidic residues predominate over residues 25-34; sequence REQERKLEQE. Residues Arg-95, Gly-172, Asp-190, Asp-202, Phe-203, and Ser-244 each contribute to the S-adenosyl-L-methionine site.

It belongs to the BMT2/SAMTOR family. As to quaternary structure, interacts with the DEPDC5 subunit of the GATOR1 complex; interaction is disrupted when SAMTOR binds S-adenosyl-L-methionine. Interacts with the KICSTOR complex; interaction is disrupted when SAMTOR binds S-adenosyl-L-methionine.

Its function is as follows. S-adenosyl-L-methionine-binding protein that acts as an inhibitor of mTORC1 signaling via interaction with the GATOR1 and KICSTOR complexes. Acts as a sensor of S-adenosyl-L-methionine to signal methionine sufficiency to mTORC1: in presence of methionine, binds S-adenosyl-L-methionine, leading to disrupt interaction with the GATOR1 and KICSTOR complexes and promote mTORC1 signaling. Upon methionine starvation, S-adenosyl-L-methionine levels are reduced, thereby promoting the association with GATOR1 and KICSTOR, leading to inhibit mTORC1 signaling. Probably also acts as a S-adenosyl-L-methionine-dependent methyltransferase (Potential). This is S-adenosylmethionine sensor upstream of mTORC1 from Homo sapiens (Human).